Consider the following 547-residue polypeptide: Chaperonin GroEL (547 aa).

Residues Thr-30–Pro-33, Lys-51, Asp-87–Thr-91, Gly-414, Asn-478–Ala-480, and Asp-494 each bind ATP.

The protein belongs to the chaperonin (HSP60) family. Forms a cylinder of 14 subunits composed of two heptameric rings stacked back-to-back. Interacts with the co-chaperonin GroES.

The protein resides in the cytoplasm. The catalysed reaction is ATP + H2O + a folded polypeptide = ADP + phosphate + an unfolded polypeptide.. Together with its co-chaperonin GroES, plays an essential role in assisting protein folding. The GroEL-GroES system forms a nano-cage that allows encapsulation of the non-native substrate proteins and provides a physical environment optimized to promote and accelerate protein folding. This is Chaperonin GroEL from Klebsiella pneumoniae.